The sequence spans 331 residues: Isopenicillin N synthase (331 aa).

R87, Y91, S183, and Y189 together coordinate isopenicillin N. Residues R87, Y91, S183, Y189, H214, and D216 each coordinate N-[(5S)-5-amino-5-carboxypentanoyl]-L-cysteinyl-D-valine. The 108-residue stretch at 181–288 (LSSVVLIRYP…RQSLPFFVNL (108 aa)) folds into the Fe2OG dioxygenase domain. Positions 214, 216, and 270 each coordinate Fe(2+). R279 is a 2-oxoglutarate binding site. S281 serves as a coordination point for isopenicillin N. N-[(5S)-5-amino-5-carboxypentanoyl]-L-cysteinyl-D-valine is bound at residue S281.

Belongs to the iron/ascorbate-dependent oxidoreductase family. Fe(2+) is required as a cofactor.

The protein localises to the cytoplasm. The protein resides in the cytosol. The catalysed reaction is N-[(5S)-5-amino-5-carboxypentanoyl]-L-cysteinyl-D-valine + O2 = isopenicillin N + 2 H2O. Its pathway is antibiotic biosynthesis; penicillin G biosynthesis; penicillin G from L-alpha-aminoadipate and L-cysteine and L-valine: step 2/3. Isopenicillin N synthase; part of the gene cluster that mediates the biosynthesis of penicillin, the world's most important antibiotic. The first step of the pathway is performed by the trimodular NRPS acvA that produces the tripeptide N-[(5S)-5-amino-5-carboxypentanoyl]-L-cysteinyl-D-valine (LLD-ACV or ACV) via condensation of the 3 residues L-2-aminoadipate, L-cysteine and L-valine. The precursor amino acids for penicillin biosynthesis are withdrawn from the vacuolar amino acid pool by the MFS-type transporter penV. Each of the constituent amino acids of the tripeptide acv are activated as aminoacyl-adenylates with peptide bonds formed through the participation of amino acid thioester intermediates. The tripeptide ACV is then cyclized to form isopenicillin N (IPN) by the isopenicillin N synthase ipnA that forms the beta-lactam nucleus. Finally, the alpha-aminoadipyl side chain is exchanged for phenylacetic acid by the isopenicillin N acyltransferase aatA to yield penicillin. This step occurs in the peroxisomal matrix and the penM and paaT transporters are involved in the isopenicillin N and phenylacetic acid import into the peroxisome, respectively. This is Isopenicillin N synthase from Penicillium rubens (strain ATCC 28089 / DSM 1075 / NRRL 1951 / Wisconsin 54-1255) (Penicillium chrysogenum).